A 393-amino-acid chain; its full sequence is uncharacterized protein (393 aa).

The B box-type zinc finger occupies 6–47 (KYDNKCAIHKEHKIKMICATCKDVVCNECILLDHNGHKFGRI). Positions 11, 14, 34, and 39 each coordinate Zn(2+).

This is an uncharacterized protein from Dictyostelium discoideum (Social amoeba).